Here is a 330-residue protein sequence, read N- to C-terminus: G-protein coupled receptor 157 (330 aa).

The Extracellular portion of the chain corresponds to 1–15 (MPSPAPPTELLPWER). A helical membrane pass occupies residues 16-36 (AVVLLSCALSALGSGLLVATH). Over 37-48 (ALWPDLRSRARR) the chain is Cytoplasmic. A helical transmembrane segment spans residues 49 to 69 (LLLFLSLADLLSAASYFYGVL). Residues 70-87 (QDFAGTSWDCVLQGALST) lie on the Extracellular side of the membrane. A helical transmembrane segment spans residues 88–108 (FANTSSFFWTVAIALYLYLSI). Residues 109-119 (VRTTRGPSTDH) are Cytoplasmic-facing. The chain crosses the membrane as a helical span at residues 120-140 (LIWAFHLISWGVPLAITVAAV). Topologically, residues 141-166 (SLKKIGYDASDVSVGWCWINLEAEDR) are extracellular. Residues 167–187 (VLWMLLTGKLWEMLAYILLPL) form a helical membrane-spanning segment. Residues 188–227 (LYLLVRKHINRAHQALSEYRPICEGRQLQRGSSTSTADKK) lie on the Cytoplasmic side of the membrane. Residues 228–248 (LVLIPLIFICLRVWSTVRFVL) traverse the membrane as a helical segment. Residues 249-259 (TLCGSPAVQTP) are Extracellular-facing. Residues 260-280 (VLVVLHGIGNTFQGGANCIMF) traverse the membrane as a helical segment. Over 281 to 330 (VLCTRAVRTRLFSLCCCCPRPSTQSPPGAPTPPKIGESQESRRTPEVPST) the chain is Cytoplasmic. Residues 301–330 (PSTQSPPGAPTPPKIGESQESRRTPEVPST) are disordered. A compositionally biased stretch (basic and acidic residues) spans 317-330 (ESQESRRTPEVPST).

The protein belongs to the G-protein coupled receptor 2 family. As to expression, expressed in the primary cilia of radial glial progenitors (RGPs) in the developing neocortex.

Its subcellular location is the cell projection. The protein resides in the cilium membrane. Orphan receptor that promotes neuronal differentiation of radial glial progenitors (RGPs). The activity of this receptor is mediated by a G(q)-protein that activates a phosphatidylinositol-calcium second messenger. The protein is G-protein coupled receptor 157 (Gpr157) of Mus musculus (Mouse).